The following is a 102-amino-acid chain: Glutaredoxin-C14 (102 aa).

A Glutaredoxin domain is found at 1-101; the sequence is MDKVMRMSSE…PLIKPYQSFH (101 aa). Residues Cys-21 and Cys-24 are joined by a disulfide bond.

It belongs to the glutaredoxin family. CC-type subfamily.

Its subcellular location is the cytoplasm. Its function is as follows. Has a glutathione-disulfide oxidoreductase activity in the presence of NADPH and glutathione reductase. Reduces low molecular weight disulfides and proteins. This chain is Glutaredoxin-C14 (GRXC14), found in Arabidopsis thaliana (Mouse-ear cress).